Here is a 124-residue protein sequence, read N- to C-terminus: Small ribosomal subunit protein uS12 (124 aa).

A disordered region spans residues 1 to 28 (MPTIQQLIRSERSKAKKKTKSPALKQCP). Asp-89 is modified (3-methylthioaspartic acid). A disordered region spans residues 101–124 (TLDAQGVKDRKQGRSKYGTKKPKE). A compositionally biased stretch (basic residues) spans 113-124 (GRSKYGTKKPKE).

Belongs to the universal ribosomal protein uS12 family. Part of the 30S ribosomal subunit. Contacts proteins S8 and S17. May interact with IF1 in the 30S initiation complex.

Functionally, with S4 and S5 plays an important role in translational accuracy. Its function is as follows. Interacts with and stabilizes bases of the 16S rRNA that are involved in tRNA selection in the A site and with the mRNA backbone. Located at the interface of the 30S and 50S subunits, it traverses the body of the 30S subunit contacting proteins on the other side and probably holding the rRNA structure together. The combined cluster of proteins S8, S12 and S17 appears to hold together the shoulder and platform of the 30S subunit. The polypeptide is Small ribosomal subunit protein uS12 (Crocosphaera subtropica (strain ATCC 51142 / BH68) (Cyanothece sp. (strain ATCC 51142))).